We begin with the raw amino-acid sequence, 554 residues long: Terpene synthase 17 (554 aa).

Residues D306, D310, and E458 each coordinate Mg(2+). Positions 306 to 310 match the DDXXD motif motif; that stretch reads DDTYD.

The protein belongs to the terpene synthase family. Tpsa subfamily. Mg(2+) serves as cofactor. Mn(2+) is required as a cofactor. Mostly expressed in stem and trichomes, to a lower extent in leaves, flowers and roots and, at low levels, in fruits.

It carries out the reaction (2Z,6Z)-farnesyl diphosphate = beta-bisabolene + diphosphate. The catalysed reaction is (2E,6E)-farnesyl diphosphate = (+)-valencene + diphosphate. It catalyses the reaction (2E,6E)-farnesyl diphosphate = (E)-beta-farnesene + diphosphate. The enzyme catalyses (2E,6E)-farnesyl diphosphate = gamma-gurjunene + diphosphate. It carries out the reaction (2Z,6Z)-farnesyl diphosphate = (E)-gamma-bisabolene + diphosphate. The catalysed reaction is (2E)-geranyl diphosphate = limonene + diphosphate. It catalyses the reaction (2E)-geranyl diphosphate = beta-myrcene + diphosphate. The enzyme catalyses (2E)-geranyl diphosphate = (E)-beta-ocimene + diphosphate. It carries out the reaction (2E)-geranyl diphosphate = terpinolene + diphosphate. The catalysed reaction is (2E)-geranyl diphosphate = gamma-terpinene + diphosphate. It catalyses the reaction (2Z,6Z)-farnesyl diphosphate = (Z)-gamma-bisabolene + diphosphate. The enzyme catalyses (2E,6E)-farnesyl diphosphate = (1S,5S,6R)-alpha-bergamotene + diphosphate. It carries out the reaction (2Z,6Z)-farnesyl diphosphate = (1S,5S,6S)-alpha-bergamotene + diphosphate. It participates in secondary metabolite biosynthesis; terpenoid biosynthesis. Sesquiterpene synthase involved in the biosynthesis of volatile compounds. Mediates the conversion of (2E,6E)-farnesyl diphosphate (FPP) into gamma-gurjunene, (E)-beta-farnesene and (+)-valencene, and of (2Z,6Z)-farnesyl diphosphate ((ZZ)-FPP) into (E)-alpha-bergamotene and (Z)-gamma-bisabolene as well as beta-bisabolene, (Z)-alpha-bergamotene and (E)-gamma-bisabolene to a lower extent. Can act with a low efficiency as a monoterpene synthase with geranyl diphosphate (GPP) as substrate, thus producing beta-myrcene, (E)-beta-ocimene, limonene, terpinolene, gamma-terpinene and (Z)-beta-ocimene. The sequence is that of Terpene synthase 17 from Solanum lycopersicum (Tomato).